The following is a 404-amino-acid chain: UPF0674 endoplasmic reticulum membrane protein YNR021W (404 aa).

An N-acetylserine modification is found at Ser2. A glycan (N-linked (GlcNAc...) asparagine) is linked at Asn44. A helical transmembrane segment spans residues 49–68; sequence LCALGVLFLVYAFYKFGNSV. A glycan (N-linked (GlcNAc...) asparagine) is linked at Asn98. The disordered stretch occupies residues 369–404; sequence AKRRQLKASGQQEKVDQKMKEKRERRLKNKQRTRFQ. Over residues 381 to 392 the composition is skewed to basic and acidic residues; that stretch reads EKVDQKMKEKRE. Residues 393–404 show a composition bias toward basic residues; it reads RRLKNKQRTRFQ.

This sequence belongs to the UPF0674 family.

The protein localises to the endoplasmic reticulum membrane. The sequence is that of UPF0674 endoplasmic reticulum membrane protein YNR021W from Saccharomyces cerevisiae (strain ATCC 204508 / S288c) (Baker's yeast).